A 1116-amino-acid chain; its full sequence is Protein translocase subunit SecA (1116 aa).

Residues glutamine 176, 194–198 (GEGKT), and aspartate 693 contribute to the ATP site.

The protein belongs to the SecA family. As to quaternary structure, monomer and homodimer. Part of the essential Sec protein translocation apparatus which comprises SecA, SecYEG and auxiliary proteins SecDF. Other proteins may also be involved.

It is found in the cell inner membrane. The protein localises to the cytoplasm. It catalyses the reaction ATP + H2O + cellular proteinSide 1 = ADP + phosphate + cellular proteinSide 2.. In terms of biological role, part of the Sec protein translocase complex. Interacts with the SecYEG preprotein conducting channel. Has a central role in coupling the hydrolysis of ATP to the transfer of proteins into and across the cell membrane, serving as an ATP-driven molecular motor driving the stepwise translocation of polypeptide chains across the membrane. In Amoebophilus asiaticus (strain 5a2), this protein is Protein translocase subunit SecA.